The sequence spans 219 residues: ATP-dependent dethiobiotin synthetase BioD (219 aa).

12–17 provides a ligand contact to ATP; it reads EVGKTY. Mg(2+) is bound at residue Thr-16. The active site involves Lys-37. Ser-41 lines the substrate pocket. Residues Asp-52, 114–117, and 174–175 contribute to the ATP site; these read EGAG and NC. Mg(2+)-binding residues include Asp-52 and Glu-114.

This sequence belongs to the dethiobiotin synthetase family. Homodimer. Mg(2+) serves as cofactor.

The protein localises to the cytoplasm. The catalysed reaction is (7R,8S)-7,8-diammoniononanoate + CO2 + ATP = (4R,5S)-dethiobiotin + ADP + phosphate + 3 H(+). Its pathway is cofactor biosynthesis; biotin biosynthesis; biotin from 7,8-diaminononanoate: step 1/2. Catalyzes a mechanistically unusual reaction, the ATP-dependent insertion of CO2 between the N7 and N8 nitrogen atoms of 7,8-diaminopelargonic acid (DAPA, also called 7,8-diammoniononanoate) to form a ureido ring. This is ATP-dependent dethiobiotin synthetase BioD from Francisella tularensis subsp. holarctica (strain FTNF002-00 / FTA).